A 551-amino-acid chain; its full sequence is Protein MTL1 (551 aa).

The first 35 residues, 1–35 (MASCNPTRKKSSASSLSMWRTILMALTTLPLSVLS), serve as a signal peptide directing secretion. The Extracellular portion of the chain corresponds to 36 to 361 (QELVPANSTT…HSGLSKKNRN (326 aa)). 3 disordered regions span residues 108 to 143 (MQVS…IISS), 206 to 227 (PSSS…SYSS), and 243 to 263 (SSSS…SSSS). A helical transmembrane segment spans residues 362–382 (IIIGCVVGIGAPLILILLILI). Residues 383–551 (YMFCVQPKKT…PNNGLNITNY (169 aa)) lie on the Cytoplasmic side of the membrane. The disordered stretch occupies residues 429 to 513 (SSDSPIGSNN…SNSNSQDYND (85 aa)). The segment covering 430-441 (SDSPIGSNNIQN) has biased composition (polar residues). The span at 466–477 (GYDDDDDDDAND) shows a compositional bias: acidic residues. Phosphoserine is present on residues S481 and S482. Residues 498-508 (SASYSMSNSNS) show a composition bias toward low complexity.

The protein belongs to the MID2 like cell wall stress sensor family.

It is found in the membrane. In terms of biological role, involved in cell integrity signaling during vegetative growth at elevated temperature. Acts positively on the PKC1-MAPK pathway. Cell membrane sensor of oxidative stress in the cell integrity pathway upstream of PKC1. Required to transmit the oxidative signal to SLT2 and to restore the correct actin organization following oxidative stress. Multicopy suppressor of 1,3-beta-glucan synthase (GS) mutation. Also suppresses RGD1 null mutations. The protein is Protein MTL1 (MTL1) of Saccharomyces cerevisiae (strain ATCC 204508 / S288c) (Baker's yeast).